Here is a 596-residue protein sequence, read N- to C-terminus: Aspartate--tRNA(Asp/Asn) ligase (596 aa).

Glu175 lines the L-aspartate pocket. Residues 199 to 202 (QQYK) form an aspartate region. L-aspartate contacts are provided by Arg221 and His454. Position 221 to 223 (221 to 223 (RDE)) interacts with ATP. ATP is bound at residue Glu488. Arg495 serves as a coordination point for L-aspartate. 540-543 (GIDR) contacts ATP.

Belongs to the class-II aminoacyl-tRNA synthetase family. Type 1 subfamily. In terms of assembly, homodimer.

The protein localises to the cytoplasm. It carries out the reaction tRNA(Asx) + L-aspartate + ATP = L-aspartyl-tRNA(Asx) + AMP + diphosphate. Functionally, aspartyl-tRNA synthetase with relaxed tRNA specificity since it is able to aspartylate not only its cognate tRNA(Asp) but also tRNA(Asn). Reaction proceeds in two steps: L-aspartate is first activated by ATP to form Asp-AMP and then transferred to the acceptor end of tRNA(Asp/Asn). This chain is Aspartate--tRNA(Asp/Asn) ligase, found in Rhizobium leguminosarum bv. trifolii (strain WSM2304).